The primary structure comprises 91 residues: Lactococcin-B immunity protein (91 aa).

Functionally, imparts immunity to lactococcin-B to naturally sensitive host strains. This is Lactococcin-B immunity protein (lciB) from Lactococcus lactis subsp. cremoris (Streptococcus cremoris).